Here is a 329-residue protein sequence, read N- to C-terminus: Beta-ketoacyl-[acyl-carrier-protein] synthase III (329 aa).

Catalysis depends on residues Cys-123 and His-256. The interval Gln-257–Arg-261 is ACP-binding. The active site involves Asn-286.

Belongs to the thiolase-like superfamily. FabH family. Homodimer.

It localises to the cytoplasm. It carries out the reaction malonyl-[ACP] + acetyl-CoA + H(+) = 3-oxobutanoyl-[ACP] + CO2 + CoA. It functions in the pathway lipid metabolism; fatty acid biosynthesis. Catalyzes the condensation reaction of fatty acid synthesis by the addition to an acyl acceptor of two carbons from malonyl-ACP. Catalyzes the first condensation reaction which initiates fatty acid synthesis and may therefore play a role in governing the total rate of fatty acid production. Possesses both acetoacetyl-ACP synthase and acetyl transacylase activities. Its substrate specificity determines the biosynthesis of branched-chain and/or straight-chain of fatty acids. In Bordetella parapertussis (strain 12822 / ATCC BAA-587 / NCTC 13253), this protein is Beta-ketoacyl-[acyl-carrier-protein] synthase III.